A 793-amino-acid polypeptide reads, in one-letter code: Phenylalanine--tRNA ligase beta subunit (793 aa).

A tRNA-binding domain is found at 40 to 159 (SKLNTKLVIG…MDEMVGREIS (120 aa)). The region spanning 401–476 (NYDNVYSITL…RLYGYDNIIE (76 aa)) is the B5 domain. The Mg(2+) site is built by aspartate 454, aspartate 460, glutamate 463, and glutamate 464. The FDX-ACB domain occupies 701 to 793 (SKFQKSTRDI…NLKELKVKVR (93 aa)).

It belongs to the phenylalanyl-tRNA synthetase beta subunit family. Type 1 subfamily. In terms of assembly, tetramer of two alpha and two beta subunits. Requires Mg(2+) as cofactor.

It is found in the cytoplasm. The catalysed reaction is tRNA(Phe) + L-phenylalanine + ATP = L-phenylalanyl-tRNA(Phe) + AMP + diphosphate + H(+). The chain is Phenylalanine--tRNA ligase beta subunit from Mesoplasma florum (strain ATCC 33453 / NBRC 100688 / NCTC 11704 / L1) (Acholeplasma florum).